The following is a 221-amino-acid chain: Thiamine-phosphate synthase (221 aa).

4-amino-2-methyl-5-(diphosphooxymethyl)pyrimidine-binding positions include 46–50 and asparagine 82; that span reads QFREK. Residues aspartate 83 and aspartate 102 each contribute to the Mg(2+) site. Serine 121 serves as a coordination point for 4-amino-2-methyl-5-(diphosphooxymethyl)pyrimidine. 148-150 is a binding site for 2-[(2R,5Z)-2-carboxy-4-methylthiazol-5(2H)-ylidene]ethyl phosphate; that stretch reads TQS. Position 151 (lysine 151) interacts with 4-amino-2-methyl-5-(diphosphooxymethyl)pyrimidine. 2-[(2R,5Z)-2-carboxy-4-methylthiazol-5(2H)-ylidene]ethyl phosphate is bound by residues glycine 180 and 200–201; that span reads IS.

This sequence belongs to the thiamine-phosphate synthase family. The cofactor is Mg(2+).

The catalysed reaction is 2-[(2R,5Z)-2-carboxy-4-methylthiazol-5(2H)-ylidene]ethyl phosphate + 4-amino-2-methyl-5-(diphosphooxymethyl)pyrimidine + 2 H(+) = thiamine phosphate + CO2 + diphosphate. The enzyme catalyses 2-(2-carboxy-4-methylthiazol-5-yl)ethyl phosphate + 4-amino-2-methyl-5-(diphosphooxymethyl)pyrimidine + 2 H(+) = thiamine phosphate + CO2 + diphosphate. It catalyses the reaction 4-methyl-5-(2-phosphooxyethyl)-thiazole + 4-amino-2-methyl-5-(diphosphooxymethyl)pyrimidine + H(+) = thiamine phosphate + diphosphate. It participates in cofactor biosynthesis; thiamine diphosphate biosynthesis; thiamine phosphate from 4-amino-2-methyl-5-diphosphomethylpyrimidine and 4-methyl-5-(2-phosphoethyl)-thiazole: step 1/1. Condenses 4-methyl-5-(beta-hydroxyethyl)thiazole monophosphate (THZ-P) and 2-methyl-4-amino-5-hydroxymethyl pyrimidine pyrophosphate (HMP-PP) to form thiamine monophosphate (TMP). This chain is Thiamine-phosphate synthase, found in Pasteurella multocida (strain Pm70).